A 555-amino-acid chain; its full sequence is Luciferin 2-monooxygenase (555 aa).

The first 11 residues, 1 to 11 (MKIIILSVILA), serve as a signal peptide directing secretion. VWFD domains follow at residues 80 to 266 (IECR…EYCK) and 319 to 494 (GTCV…RLCN). 4 disulfide bridges follow: Cys82–Cys222, Cys321–Cys454, Cys343–Cys493, and Cys352–Cys451. N-linked (GlcNAc...) asparagine glycans are attached at residues Asn186 and Asn408.

In terms of processing, the cysteine residues presumably exist in intramolecular disulfide bridges. The N-terminus is blocked.

The catalysed reaction is Cypridina luciferin + O2 = oxidized Cypridina luciferin + hnu + CO2. The sequence is that of Luciferin 2-monooxygenase from Vargula hilgendorfii (Sea firefly).